The primary structure comprises 171 residues: Shikimate kinase (171 aa).

Position 14–19 (14–19 (GAGKST)) interacts with ATP. Residue S18 participates in Mg(2+) binding. 3 residues coordinate substrate: D36, R60, and G82. Residue R120 participates in ATP binding. R139 contributes to the substrate binding site. Q156 serves as a coordination point for ATP.

Belongs to the shikimate kinase family. As to quaternary structure, monomer. The cofactor is Mg(2+).

It is found in the cytoplasm. The catalysed reaction is shikimate + ATP = 3-phosphoshikimate + ADP + H(+). The protein operates within metabolic intermediate biosynthesis; chorismate biosynthesis; chorismate from D-erythrose 4-phosphate and phosphoenolpyruvate: step 5/7. Its function is as follows. Catalyzes the specific phosphorylation of the 3-hydroxyl group of shikimic acid using ATP as a cosubstrate. This Shewanella sp. (strain MR-4) protein is Shikimate kinase.